The primary structure comprises 365 residues: Eukaryotic translation initiation factor 3 subunit H (365 aa).

Residues valine 11–phenylalanine 160 enclose the MPN domain.

Belongs to the eIF-3 subunit H family. Component of the eukaryotic translation initiation factor 3 (eIF-3) complex.

The protein localises to the cytoplasm. Component of the eukaryotic translation initiation factor 3 (eIF-3) complex, which is involved in protein synthesis of a specialized repertoire of mRNAs and, together with other initiation factors, stimulates binding of mRNA and methionyl-tRNAi to the 40S ribosome. The eIF-3 complex specifically targets and initiates translation of a subset of mRNAs involved in cell proliferation. This Aspergillus oryzae (strain ATCC 42149 / RIB 40) (Yellow koji mold) protein is Eukaryotic translation initiation factor 3 subunit H.